The following is a 147-amino-acid chain: Acidic phospholipase A2 beta-bungarotoxin A3 chain (147 aa).

The N-terminal stretch at 1-19 (MYPAHLLVLSAVCVSLLGA) is a signal peptide. The propeptide occupies 20-27 (ANIPPHPL). Intrachain disulfides connect C54–C146, C56–C72, C71–C127, C78–C120, C88–C113, and C106–C118. Ca(2+) contacts are provided by Y55, G57, and G59. The active site involves H75. D76 is a Ca(2+) binding site. The active site involves D121.

It belongs to the phospholipase A2 family. Group I subfamily. D49 sub-subfamily. In terms of assembly, heterodimer; disulfide-linked. The A chains have phospholipase A2 activity and the B chains show homology with the basic protease inhibitors. The A3 chain is found in beta-5 bungarotoxins. Requires Ca(2+) as cofactor. Expressed by the venom gland.

It is found in the secreted. It catalyses the reaction a 1,2-diacyl-sn-glycero-3-phosphocholine + H2O = a 1-acyl-sn-glycero-3-phosphocholine + a fatty acid + H(+). In terms of biological role, snake venom phospholipase A2 (PLA2) that inhibits neuromuscular transmission by blocking acetylcholine release from the nerve termini. PLA2 catalyzes the calcium-dependent hydrolysis of the 2-acyl groups in 3-sn-phosphoglycerides. This chain is Acidic phospholipase A2 beta-bungarotoxin A3 chain, found in Bungarus multicinctus (Many-banded krait).